A 354-amino-acid chain; its full sequence is MPALANLNIVPFISVENMMDLAVSTGIENFLVQLAGYIEEDFRRWESFDKIPRIASHSRDGVIELMPTSDGTLYGFKYVNGHPKNTKSGRQTVTAFGVLSDVDSGYPLLLSEMTILTALRTAATSAIAAKYLARKDSRTMALIGNGAQSEFQALAFKALIGVDRIRLYDIDPEATARCSRNLQRFGFQIEACTSAEQAVEGADIITTATADKHNATILSDNMIGPGVHINGVGGDCPGKTEMHRDILLRSDIFVEFPPQTRIEGEIQQLAPDHPVTELWRVMTGQDVGRKSDKQITLFDSVGFAIEDFSALRYVRDRVEGSSHSSPLDLLADPDEPRDLFGMLLRRQAFRRLGG.

Residues Arg53 and Lys77 each contribute to the L-ornithine site. Residues Thr92, Arg120, 147 to 148 (AQ), Asp169, Thr209, 232 to 235 (VGGD), Lys239, and Ser300 each bind NAD(+). Residue Arg120 participates in L-ornithine binding. Residue Asp235 participates in L-ornithine binding. Asp235 serves as the catalytic Proton donor/acceptor. Residue Val301 coordinates L-ornithine.

Belongs to the ornithine cyclodeaminase/mu-crystallin family. NAD(+) serves as cofactor.

The enzyme catalyses L-ornithine = L-proline + NH4(+). It participates in amino-acid biosynthesis; L-proline biosynthesis; L-proline from L-ornithine: step 1/1. With respect to regulation, is subject to substrate inhibition. Is regulated by L-arginine, which stimulates enzymatic activity at 0.1-1 mM while inhibits activity at higher concentrations, and has pronounced effects on the optima for pH and temperature and on the Km for L-ornithine. Is not inhibited by L-proline. In terms of biological role, catalyzes the conversion of L-ornithine into L-proline with release of ammonia. Is involved in the utilization of nopaline, a catabolic pathway that proceeds through L-arginine and L-ornithine to L-proline. Nopaline is a predominant opine in plant cells transformed with Ti plasmid pTiC58. This is Ornithine cyclodeaminase from Agrobacterium fabrum (strain C58 / ATCC 33970) (Agrobacterium tumefaciens (strain C58)).